Consider the following 833-residue polypeptide: F1 capsule-anchoring protein (833 aa).

The signal sequence occupies residues 1 to 25 (MRYSKLFLCAGLTLATLPCWGRAYT). Cysteine 807 and cysteine 829 form a disulfide bridge.

The protein belongs to the fimbrial export usher family.

Its subcellular location is the cell outer membrane. Functionally, a probable role in capsular biogenesis. It is likely that the caf1A molecule binds F1 antigen subunits during the extracellular secretion process. This is F1 capsule-anchoring protein (caf1A) from Yersinia pestis.